A 235-amino-acid polypeptide reads, in one-letter code: tRNA (guanine-N(1)-)-methyltransferase (235 aa).

Residues G112 and 131-136 (LGDFVL) each bind S-adenosyl-L-methionine.

Belongs to the RNA methyltransferase TrmD family. Homodimer.

It localises to the cytoplasm. It catalyses the reaction guanosine(37) in tRNA + S-adenosyl-L-methionine = N(1)-methylguanosine(37) in tRNA + S-adenosyl-L-homocysteine + H(+). Its function is as follows. Specifically methylates guanosine-37 in various tRNAs. In Synechococcus elongatus (strain ATCC 33912 / PCC 7942 / FACHB-805) (Anacystis nidulans R2), this protein is tRNA (guanine-N(1)-)-methyltransferase.